The sequence spans 431 residues: Enolase (431 aa).

Gln-166 contacts (2R)-2-phosphoglycerate. The Proton donor role is filled by Glu-208. Positions 245, 289, and 316 each coordinate Mg(2+). Residues Lys-341, Arg-370, Ser-371, and Lys-392 each coordinate (2R)-2-phosphoglycerate. Lys-341 (proton acceptor) is an active-site residue.

The protein belongs to the enolase family. Mg(2+) serves as cofactor.

The protein localises to the cytoplasm. It is found in the secreted. Its subcellular location is the cell surface. It carries out the reaction (2R)-2-phosphoglycerate = phosphoenolpyruvate + H2O. Its pathway is carbohydrate degradation; glycolysis; pyruvate from D-glyceraldehyde 3-phosphate: step 4/5. Its function is as follows. Catalyzes the reversible conversion of 2-phosphoglycerate (2-PG) into phosphoenolpyruvate (PEP). It is essential for the degradation of carbohydrates via glycolysis. The chain is Enolase from Ruminiclostridium cellulolyticum (strain ATCC 35319 / DSM 5812 / JCM 6584 / H10) (Clostridium cellulolyticum).